Here is a 527-residue protein sequence, read N- to C-terminus: Probable protein kinase UbiB (527 aa).

The helical transmembrane segment at 23-43 threads the bilayer; the sequence is ELLLELPLPFWLRALSWLLPW. The region spanning 125-488 is the Protein kinase domain; it reads RFDSQPLASA…ESDARDQWPL (364 aa). Residues 131-139 and Lys153 contribute to the ATP site; that span reads LASASVAQV. Catalysis depends on Asp288, which acts as the Proton acceptor. A helical transmembrane segment spans residues 504–524; it reads LAPLLATWPAWLMVGGGLYLV.

Belongs to the ABC1 family. UbiB subfamily.

It localises to the cell inner membrane. It participates in cofactor biosynthesis; ubiquinone biosynthesis [regulation]. Is probably a protein kinase regulator of UbiI activity which is involved in aerobic coenzyme Q (ubiquinone) biosynthesis. The protein is Probable protein kinase UbiB of Ectopseudomonas mendocina (strain ymp) (Pseudomonas mendocina).